The chain runs to 429 residues: UDP-N-acetylglucosamine 1-carboxyvinyltransferase (429 aa).

A phosphoenolpyruvate-binding site is contributed by 22–23 (KN). Arginine 102 serves as a coordination point for UDP-N-acetyl-alpha-D-glucosamine. Cysteine 126 functions as the Proton donor in the catalytic mechanism. 2-(S-cysteinyl)pyruvic acid O-phosphothioketal is present on cysteine 126. Residues 131–135 (RPVDL), aspartate 316, and isoleucine 338 contribute to the UDP-N-acetyl-alpha-D-glucosamine site.

It belongs to the EPSP synthase family. MurA subfamily.

Its subcellular location is the cytoplasm. The enzyme catalyses phosphoenolpyruvate + UDP-N-acetyl-alpha-D-glucosamine = UDP-N-acetyl-3-O-(1-carboxyvinyl)-alpha-D-glucosamine + phosphate. It participates in cell wall biogenesis; peptidoglycan biosynthesis. Its function is as follows. Cell wall formation. Adds enolpyruvyl to UDP-N-acetylglucosamine. The chain is UDP-N-acetylglucosamine 1-carboxyvinyltransferase from Nitrobacter winogradskyi (strain ATCC 25391 / DSM 10237 / CIP 104748 / NCIMB 11846 / Nb-255).